The sequence spans 92 residues: Co-chaperonin GroES (92 aa).

The protein belongs to the GroES chaperonin family. Heptamer of 7 subunits arranged in a ring. Interacts with the chaperonin GroEL.

Its subcellular location is the cytoplasm. Its function is as follows. Together with the chaperonin GroEL, plays an essential role in assisting protein folding. The GroEL-GroES system forms a nano-cage that allows encapsulation of the non-native substrate proteins and provides a physical environment optimized to promote and accelerate protein folding. GroES binds to the apical surface of the GroEL ring, thereby capping the opening of the GroEL channel. The protein is Co-chaperonin GroES of Methanosarcina barkeri (strain Fusaro / DSM 804).